Consider the following 545-residue polypeptide: MTTNYIFVTGGVVSSLGKGIAAASLAAILEARGLNVTIMKLDPYINVDPGTMSPIQHGEVFVTEDGAETDLDLGHYERFIRTKMSRRNNFTTGRIYSDVLRKERRGDYLGATVQVIPHITNAIKERVLEGGEGHDVVLVEIGGTVGDIESLPFLEAIRQMAVEIGREHTLFMHLTLVPYMAAAGEVKTKPTQHSVKELLSIGIQPDILICRSDRAVPANERAKIALFCNVPEKAVISLKDVDSIYKIPGLLKSQGLDDYICKRFSLNCPEANLSEWEQVIYEEANPAGEVTIGMVGKYIELPDAYKSVIEALKHGGLKNRVTVNIKLIDSQDVETRGVEILKDLDAILIPGGFGYRGVEGKIATARYARENNIPYLGICLGMQVALIEFARNVAGMDNANSTEFVPDCKYPVVALITEWRDEDGNVEVRSEKSDLGGTMRLGAQQCQLNDDSLVRQLYGAPTIVERHRHRYEVNNMLLKQIEAAGLRVAGRSGDDQLVEIIEVPNHPWFVACQFHPEFTSTPRDGHPLFAGFVKAASEHQKRQAK.

The interval 1 to 266 (MTTNYIFVTG…DDYICKRFSL (266 aa)) is amidoligase domain. Residue S14 participates in CTP binding. S14 is a binding site for UTP. ATP contacts are provided by residues 15 to 20 (SLGKGI) and D72. Residues D72 and E140 each coordinate Mg(2+). CTP-binding positions include 147-149 (DIE), 187-192 (KTKPTQ), and K223. UTP is bound by residues 187 to 192 (KTKPTQ) and K223. 239–241 (KDV) serves as a coordination point for ATP. Residues 291 to 542 (TIGMVGKYIE…VKAASEHQKR (252 aa)) enclose the Glutamine amidotransferase type-1 domain. Residue G352 coordinates L-glutamine. Residue C379 is the Nucleophile; for glutamine hydrolysis of the active site. L-glutamine is bound by residues 380–383 (LGMQ), E403, and R470. Residues H515 and E517 contribute to the active site.

This sequence belongs to the CTP synthase family. Homotetramer.

The enzyme catalyses UTP + L-glutamine + ATP + H2O = CTP + L-glutamate + ADP + phosphate + 2 H(+). It catalyses the reaction L-glutamine + H2O = L-glutamate + NH4(+). It carries out the reaction UTP + NH4(+) + ATP = CTP + ADP + phosphate + 2 H(+). It functions in the pathway pyrimidine metabolism; CTP biosynthesis via de novo pathway; CTP from UDP: step 2/2. Its activity is regulated as follows. Allosterically activated by GTP, when glutamine is the substrate; GTP has no effect on the reaction when ammonia is the substrate. The allosteric effector GTP functions by stabilizing the protein conformation that binds the tetrahedral intermediate(s) formed during glutamine hydrolysis. Inhibited by the product CTP, via allosteric rather than competitive inhibition. Catalyzes the ATP-dependent amination of UTP to CTP with either L-glutamine or ammonia as the source of nitrogen. Regulates intracellular CTP levels through interactions with the four ribonucleotide triphosphates. This is CTP synthase from Salmonella arizonae (strain ATCC BAA-731 / CDC346-86 / RSK2980).